Here is a 68-residue protein sequence, read N- to C-terminus: Large ribosomal subunit protein eL24 (68 aa).

Zn(2+) is bound by residues cysteine 7, cysteine 10, cysteine 33, and cysteine 37. A C4-type zinc finger spans residues cysteine 7–cysteine 37.

The protein belongs to the eukaryotic ribosomal protein eL24 family. In terms of assembly, part of the 50S ribosomal subunit. Forms a cluster with proteins L3 and L14. The cofactor is Zn(2+).

In terms of biological role, binds to the 23S rRNA. This chain is Large ribosomal subunit protein eL24, found in Thermococcus gammatolerans (strain DSM 15229 / JCM 11827 / EJ3).